The following is a 184-amino-acid chain: MGNRLSKIATRTGDAGTTGLGDGSRVGKNSLRIVAIGDVDELNSHIGLLLTEPDLPEDVRAALLHIQHDLFDLGGELSIPGYTLLKAPQVAQLDDWLAHYNAALPRLAEFILPGGSRPAAQAHICRTVCRRAERALVELGAAEALNEAPRQYLNRLSDLLFVLARVLNRAGGGSDVLWQRERES.

The interval 1-21 (MGNRLSKIATRTGDAGTTGLG) is disordered. Residues 10-13 (TRTG), 18-19 (TG), lysine 28, 130-134 (RRAER), and asparagine 154 each bind ATP.

It belongs to the Cob(I)alamin adenosyltransferase family. In terms of assembly, homotrimer.

The enzyme catalyses 2 cob(II)alamin + AH2 + 2 ATP = 2 adenosylcob(III)alamin + 2 triphosphate + A + 2 H(+). Its activity is regulated as follows. Is potentially allosterically regulated by GTP/GDP, which enhances its affinity for AdoCbl by 5-fold. Binds cob(II)alamin weakly in the absence of ATP. The presence of ATP (but not GTP or GDP) increases the affinity of cob(II)alamin for the enzyme, and stoichiometric binding is observed. GTP blocks the transfer of cob(II)alamin to IcmF from ATR, thus averting its reconstitution with inactive cofactor. Its function is as follows. Adenosyltransferase that catalyzes the conversion of cob(II)alamin to adenosylcob(III)alamin (AdoCbl) in the presence of ATP and an electron donor. Acts as an accessory protein of IcmF that functions in cofactor repair, since IcmF is prone to inactivation during catalytic turnover due to the occasional loss of the 5'-deoxyadenosine moiety and formation of the inactive cob(II)alamin cofactor in its active site. Thus, receives and repairs the inactive cofactor, which is then reloaded onto IcmF in a GTPase-gated step. This chain is Cobalamin adenosyltransferase, found in Cupriavidus metallidurans (strain ATCC 43123 / DSM 2839 / NBRC 102507 / CH34) (Ralstonia metallidurans).